We begin with the raw amino-acid sequence, 326 residues long: Ficolin-1 (326 aa).

A signal peptide spans 1 to 29 (MELSRVAVALGPTGQLLLFLSFQTLAAQA). Residues 55–93 (GLPGAAGPKGEAGANGPKGERGSPGVVGKAGPAGPKGDR) form the Collagen-like domain. Low complexity-rich tracts occupy residues 61–71 (GPKGEAGANGP) and 78–89 (PGVVGKAGPAGP). Positions 61-110 (GPKGEAGANGPKGERGSPGVVGKAGPAGPKGDRGEKGARGEKGEPGQLQS) are disordered. The span at 90 to 104 (KGDRGEKGARGEKGE) shows a compositional bias: basic and acidic residues. A Fibrinogen C-terminal domain is found at 109 to 326 (QSCATGPRTC…QVSEMKVRLT (218 aa)). 2 disulfides stabilise this stretch: Cys-111/Cys-139 and Cys-118/Cys-146. The segment at 115-154 (PRTCKELLTRGHFLSGWHTIYLPDCQPLTVLCDMDTDGGG) is a domain; contributes to trimerization. The segment at 155–243 (WTVFQRRSDG…LVLGGFLEGN (89 aa)) is b domain; contributes to trimerization. Residues Asp-262 and Asp-264 each contribute to the Ca(2+) site. N-linked (GlcNAc...) asparagine glycosylation is present at Asn-265. The cysteines at positions 270 and 283 are disulfide-linked. 282–284 (ACH) contributes to the a carbohydrate binding site. An N-linked (GlcNAc...) asparagine glycan is attached at Asn-313. Positions 317–326 (QVSEMKVRLT) are p domain.

It belongs to the ficolin lectin family. As to quaternary structure, homotrimer. Interacts with elastin/ELN. Interacts (via Fibrinogen C-terminal domain) with FFAR2. Interacts with CRP; may regulate monocyte activation by FCN1. Most abundantly expressed in placenta and lung.

Its subcellular location is the secreted. It localises to the cell membrane. Its function is as follows. Extracellular lectin functioning as a pattern-recognition receptor in innate immunity. Binds the sugar moieties of pathogen-associated molecular patterns (PAMPs) displayed on microbes and activates the lectin pathway of the complement system. May also activate monocytes through a G protein-coupled receptor, FFAR2, inducing the secretion of interleukin-8/IL-8. Binds preferentially to 9-O-acetylated 2-6-linked sialic acid derivatives and to various glycans containing sialic acid engaged in a 2-3 linkage. The chain is Ficolin-1 (FCN1) from Sus scrofa (Pig).